The chain runs to 231 residues: Biosynthetic peptidoglycan transglycosylase (231 aa).

Residues Leu-10 to Val-30 form a helical membrane-spanning segment.

Belongs to the glycosyltransferase 51 family.

It is found in the cell inner membrane. The enzyme catalyses [GlcNAc-(1-&gt;4)-Mur2Ac(oyl-L-Ala-gamma-D-Glu-L-Lys-D-Ala-D-Ala)](n)-di-trans,octa-cis-undecaprenyl diphosphate + beta-D-GlcNAc-(1-&gt;4)-Mur2Ac(oyl-L-Ala-gamma-D-Glu-L-Lys-D-Ala-D-Ala)-di-trans,octa-cis-undecaprenyl diphosphate = [GlcNAc-(1-&gt;4)-Mur2Ac(oyl-L-Ala-gamma-D-Glu-L-Lys-D-Ala-D-Ala)](n+1)-di-trans,octa-cis-undecaprenyl diphosphate + di-trans,octa-cis-undecaprenyl diphosphate + H(+). The protein operates within cell wall biogenesis; peptidoglycan biosynthesis. Functionally, peptidoglycan polymerase that catalyzes glycan chain elongation from lipid-linked precursors. The chain is Biosynthetic peptidoglycan transglycosylase from Dechloromonas aromatica (strain RCB).